A 942-amino-acid polypeptide reads, in one-letter code: Protein O-mannosyl-transferase TMTC1 (942 aa).

At 1–20 (MLVTRGDRGGGERAPSRRPR) the chain is on the cytoplasmic side. Residues 21-41 (CGLVPAGAAALLAGASCLCYG) form a helical membrane-spanning segment. Over 42 to 109 (RSLRGEFVHD…RLNIFLTGMN (68 aa)) the chain is Extracellular. A helical transmembrane segment spans residues 110–130 (PFYFHAVNVILHCLVTLVLMY). At 131–140 (TCDKTVFKNR) the chain is on the cytoplasmic side. Residues 141-157 (GLAFVTALLFAVHPVHT) form a helical membrane-spanning segment. Topologically, residues 158–159 (EA) are extracellular. The helical transmembrane segment at 160–180 (VAGIVGRADVLACLLFLLAFL) threads the bilayer. The Cytoplasmic portion of the chain corresponds to 181–196 (SYQRSLDQGCAGQCFP). Residues 197 to 217 (TTASPFFLLLSLFLGTCAMLV) traverse the membrane as a helical segment. Residues 218-331 (KETGITVFGV…LLTLRPFLKR (114 aa)) lie on the Extracellular side of the membrane. The tract at residues 245-285 (NGAVCQHSSGQPGSPQPSSQQAHPHRESRKQRFPHKDSWGG) is disordered. Residues 250-266 (QHSSGQPGSPQPSSQQA) show a composition bias toward low complexity. A helical transmembrane segment spans residues 332 to 352 (AILVISYVTVILYFRLWIMGG). Residues 353–373 (TMPLFSEQDNPASFSPYILTR) lie on the Cytoplasmic side of the membrane. A helical membrane pass occupies residues 374–394 (FLTYSYLLAFNVWLLLAPITL). Residues 395 to 414 (CYDWQVGSIPLVETIWDVRN) lie on the Extracellular side of the membrane. Residues 415 to 435 (LATILLAVVMALLSLHCVAAF) traverse the membrane as a helical segment. At 436–441 (KRLEHK) the chain is on the cytoplasmic side. The helical transmembrane segment at 442 to 462 (EVLAGLLFLVFPFIPASNLFF) threads the bilayer. A topological domain (extracellular) is located at residue Arg-463. Residues 464 to 484 (VGFVVAERVLYMPSMGYCILF) form a helical membrane-spanning segment. Over 485–498 (VHGLSKLCAGLSRC) the chain is Cytoplasmic. A helical transmembrane segment spans residues 499–519 (GATSLMASTVLLLLLFSWKTV). At 520–942 (KQNEIWLSRE…LQEVRERDQT (423 aa)) the chain is on the extracellular side. TPR repeat units follow at residues 543 to 576 (AKVH…YPRH), 577 to 607 (ASAL…HPQH), 608 to 641 (NRAL…GPDF), 642 to 675 (ADAY…CPDS), 676 to 709 (SDLH…SPSH), 710 to 742 (HVAV…VART), 743 to 776 (AEVL…QPSQ), 777 to 810 (RELR…EPRC), 811 to 844 (LECY…KPKD), 849 to 882 (SELF…DPDQ), and 883 to 916 (AQAW…VPDS).

Belongs to the TMTC family. In terms of assembly, may interact with FAM168B.

It localises to the membrane. It is found in the endoplasmic reticulum. It catalyses the reaction a di-trans,poly-cis-dolichyl beta-D-mannosyl phosphate + L-seryl-[protein] = 3-O-(alpha-D-mannosyl)-L-seryl-[protein] + a di-trans,poly-cis-dolichyl phosphate + H(+). It carries out the reaction a di-trans,poly-cis-dolichyl beta-D-mannosyl phosphate + L-threonyl-[protein] = 3-O-(alpha-D-mannosyl)-L-threonyl-[protein] + a di-trans,poly-cis-dolichyl phosphate + H(+). It functions in the pathway protein modification; protein glycosylation. Its function is as follows. Transfers mannosyl residues to the hydroxyl group of serine or threonine residues. The 4 members of the TMTC family are O-mannosyl-transferases dedicated primarily to the cadherin superfamily, each member seems to have a distinct role in decorating the cadherin domains with O-linked mannose glycans at specific regions. Also acts as O-mannosyl-transferase on other proteins such as PDIA3. The chain is Protein O-mannosyl-transferase TMTC1 from Mus musculus (Mouse).